The sequence spans 227 residues: GFP-like non-fluorescent chromoprotein (227 aa).

A cross-link (2-iminomethyl-5-imidazolinone (Glu-Gly)) is located at residues 63 to 65; sequence EYG. The residue at position 64 (Y64) is a 2,3-didehydrotyrosine.

The protein belongs to the GFP family. In terms of assembly, homotetramer. In terms of processing, contains a chromophore consisting of modified amino acid residues. The chromophore is formed by autocatalytic backbone condensation between Xaa-N and Gly-(N+2), oxidation of Tyr-(N+1) to didehydrotyrosine, and formation of a double bond to the alpha-amino nitrogen of residue Xaa-N. Maturation of the chromophore requires nothing other than molecular oxygen. The precise stereochemistry of the tyrosine has not been determined.

Non-fluorescent pigment protein that is lilac in color. This is GFP-like non-fluorescent chromoprotein from Radianthus crispa (Leathery sea anemone).